Here is a 181-residue protein sequence, read N- to C-terminus: D-lyxose/D-mannose isomerase (181 aa).

Mn(2+) contacts are provided by histidine 75, histidine 77, glutamate 88, and histidine 143.

It belongs to the D-lyxose ketol-isomerase family. As to quaternary structure, homodimer. The cofactor is Mn(2+).

It carries out the reaction D-lyxose = D-xylulose. The enzyme catalyses D-mannose = D-fructose. Functionally, sugar isomerase that catalyzes the reversible isomerization of D-lyxose to D-xylulose, and D-mannose to D-fructose. Shows optimum activity using D-lyxose as substrate, but can also effectively catalyze the isomerization between D-fructose and D-mannose. The chain is D-lyxose/D-mannose isomerase from Thermosediminibacter oceani (strain ATCC BAA-1034 / DSM 16646 / JW/IW-1228P).